Reading from the N-terminus, the 322-residue chain is tRNA U34 carboxymethyltransferase (322 aa).

Residues lysine 90, tryptophan 104, lysine 109, glycine 129, 151–153 (DPT), 180–181 (IE), methionine 195, tyrosine 199, and arginine 314 contribute to the carboxy-S-adenosyl-L-methionine site.

Belongs to the class I-like SAM-binding methyltransferase superfamily. CmoB family. In terms of assembly, homotetramer.

The catalysed reaction is carboxy-S-adenosyl-L-methionine + 5-hydroxyuridine(34) in tRNA = 5-carboxymethoxyuridine(34) in tRNA + S-adenosyl-L-homocysteine + H(+). Its function is as follows. Catalyzes carboxymethyl transfer from carboxy-S-adenosyl-L-methionine (Cx-SAM) to 5-hydroxyuridine (ho5U) to form 5-carboxymethoxyuridine (cmo5U) at position 34 in tRNAs. In Citrobacter koseri (strain ATCC BAA-895 / CDC 4225-83 / SGSC4696), this protein is tRNA U34 carboxymethyltransferase.